The primary structure comprises 234 residues: Proteasome subunit alpha type-2 (234 aa).

Ala-2 bears the N-acetylalanine mark. A Phosphotyrosine modification is found at Tyr-6. A phosphoserine mark is found at Ser-7, Ser-14, and Ser-16. Tyr-24 is subject to Phosphotyrosine. Lys-70 carries the N6-acetyllysine modification. Phosphotyrosine occurs at positions 76 and 121. Lys-171 bears the N6-acetyllysine mark.

The protein belongs to the peptidase T1A family. As to quaternary structure, the 26S proteasome consists of a 20S proteasome core and two 19S regulatory subunits. The 20S proteasome core is a barrel-shaped complex made of 28 subunits that are arranged in four stacked rings. The two outer rings are each formed by seven alpha subunits, and the two inner rings are formed by seven beta subunits. The proteolytic activity is exerted by three beta-subunits PSMB5, PSMB6 and PSMB7. Phosphorylated on tyrosine residues; which may be important for nuclear import.

The protein localises to the cytoplasm. The protein resides in the nucleus. Component of the 20S core proteasome complex involved in the proteolytic degradation of most intracellular proteins. This complex plays numerous essential roles within the cell by associating with different regulatory particles. Associated with two 19S regulatory particles, forms the 26S proteasome and thus participates in the ATP-dependent degradation of ubiquitinated proteins. The 26S proteasome plays a key role in the maintenance of protein homeostasis by removing misfolded or damaged proteins that could impair cellular functions, and by removing proteins whose functions are no longer required. Associated with the PA200 or PA28, the 20S proteasome mediates ubiquitin-independent protein degradation. This type of proteolysis is required in several pathways including spermatogenesis (20S-PA200 complex) or generation of a subset of MHC class I-presented antigenic peptides (20S-PA28 complex). The chain is Proteasome subunit alpha type-2 (PSMA2) from Bos taurus (Bovine).